We begin with the raw amino-acid sequence, 463 residues long: 23S rRNA (uracil(1939)-C(5))-methyltransferase RlmD (463 aa).

A TRAM domain is found at 6 to 76 (KSRKPQQPEY…KRLEEAEMVA (71 aa)). 4 residues coordinate [4Fe-4S] cluster: C90, C96, C99, and C178. The S-adenosyl-L-methionine site is built by Q288, F317, N322, E341, D368, and D389. C415 acts as the Nucleophile in catalysis.

This sequence belongs to the class I-like SAM-binding methyltransferase superfamily. RNA M5U methyltransferase family. RlmD subfamily.

It carries out the reaction uridine(1939) in 23S rRNA + S-adenosyl-L-methionine = 5-methyluridine(1939) in 23S rRNA + S-adenosyl-L-homocysteine + H(+). Catalyzes the formation of 5-methyl-uridine at position 1939 (m5U1939) in 23S rRNA. This is 23S rRNA (uracil(1939)-C(5))-methyltransferase RlmD from Acinetobacter baumannii (strain SDF).